We begin with the raw amino-acid sequence, 31 residues long: Cyclotide mden-M (31 aa).

A cross-link (cyclopeptide (Gly-Asn)) is located at residues 1–31; that stretch reads GTIPCGESCVYIPCITSALGCSCKKKVCYKN. Disulfide bonds link Cys5-Cys21, Cys9-Cys23, and Cys14-Cys28.

The protein belongs to the cyclotide family. Bracelet subfamily. This is a cyclic peptide.

Functionally, probably participates in a plant defense mechanism. The protein is Cyclotide mden-M of Melicytus dentatus (Tree violet).